Reading from the N-terminus, the 121-residue chain is LOB domain-containing protein 24 (121 aa).

The 102-residue stretch at 4–105 (KRCAACKYLR…NELAKTQAEI (102 aa)) folds into the LOB domain.

The protein belongs to the LOB domain-containing protein family.

This chain is LOB domain-containing protein 24 (LBD24), found in Arabidopsis thaliana (Mouse-ear cress).